Consider the following 193-residue polypeptide: Holliday junction branch migration complex subunit RuvA (193 aa).

A domain I region spans residues 1-64 (MIGRIAGTLI…EDAHLLYGFG (64 aa)). Positions 65 to 143 (TAAERETFRQ…ADLGTVPGGP (79 aa)) are domain II. The segment at 144–151 (AVSDDAVD) is flexible linker. The domain III stretch occupies residues 151–193 (DVLNALLALGYSDKEAAQAIKQVPAGTGVSEGIKLALKALSKG).

It belongs to the RuvA family. Homotetramer. Forms an RuvA(8)-RuvB(12)-Holliday junction (HJ) complex. HJ DNA is sandwiched between 2 RuvA tetramers; dsDNA enters through RuvA and exits via RuvB. An RuvB hexamer assembles on each DNA strand where it exits the tetramer. Each RuvB hexamer is contacted by two RuvA subunits (via domain III) on 2 adjacent RuvB subunits; this complex drives branch migration. In the full resolvosome a probable DNA-RuvA(4)-RuvB(12)-RuvC(2) complex forms which resolves the HJ.

It localises to the cytoplasm. Functionally, the RuvA-RuvB-RuvC complex processes Holliday junction (HJ) DNA during genetic recombination and DNA repair, while the RuvA-RuvB complex plays an important role in the rescue of blocked DNA replication forks via replication fork reversal (RFR). RuvA specifically binds to HJ cruciform DNA, conferring on it an open structure. The RuvB hexamer acts as an ATP-dependent pump, pulling dsDNA into and through the RuvAB complex. HJ branch migration allows RuvC to scan DNA until it finds its consensus sequence, where it cleaves and resolves the cruciform DNA. This chain is Holliday junction branch migration complex subunit RuvA, found in Ralstonia nicotianae (strain ATCC BAA-1114 / GMI1000) (Ralstonia solanacearum).